Here is a 262-residue protein sequence, read N- to C-terminus: Ninja-family protein 2 (262 aa).

Residues 49 to 70 (RNSLACNTSKEAAGQSPKEMNA) are disordered.

The protein belongs to the Ninja family.

It localises to the nucleus. This Zea mays (Maize) protein is Ninja-family protein 2.